Reading from the N-terminus, the 269-residue chain is Tryptophan synthase alpha chain (269 aa).

Residues E56 and D67 each act as proton acceptor in the active site.

This sequence belongs to the TrpA family. As to quaternary structure, tetramer of two alpha and two beta chains.

It catalyses the reaction (1S,2R)-1-C-(indol-3-yl)glycerol 3-phosphate + L-serine = D-glyceraldehyde 3-phosphate + L-tryptophan + H2O. It functions in the pathway amino-acid biosynthesis; L-tryptophan biosynthesis; L-tryptophan from chorismate: step 5/5. The alpha subunit is responsible for the aldol cleavage of indoleglycerol phosphate to indole and glyceraldehyde 3-phosphate. The sequence is that of Tryptophan synthase alpha chain from Mycobacterium marinum (strain ATCC BAA-535 / M).